A 366-amino-acid chain; its full sequence is Aminomethyltransferase (366 aa).

It belongs to the GcvT family. The glycine cleavage system is composed of four proteins: P, T, L and H.

The catalysed reaction is N(6)-[(R)-S(8)-aminomethyldihydrolipoyl]-L-lysyl-[protein] + (6S)-5,6,7,8-tetrahydrofolate = N(6)-[(R)-dihydrolipoyl]-L-lysyl-[protein] + (6R)-5,10-methylene-5,6,7,8-tetrahydrofolate + NH4(+). The glycine cleavage system catalyzes the degradation of glycine. This Bordetella pertussis (strain Tohama I / ATCC BAA-589 / NCTC 13251) protein is Aminomethyltransferase.